We begin with the raw amino-acid sequence, 74 residues long: uncharacterized protein (74 aa).

A helical transmembrane segment spans residues 8 to 30 (LAAAVSSSAASAGVSRIAASAMA).

The protein resides in the mitochondrion outer membrane. This is an uncharacterized protein from Saccharomyces cerevisiae (strain ATCC 204508 / S288c) (Baker's yeast).